We begin with the raw amino-acid sequence, 239 residues long: Purine nucleoside phosphorylase DeoD-type (239 aa).

His5 provides a ligand contact to a purine D-ribonucleoside. Residues Gly21, Arg25, Arg44, and Arg88–Ser91 contribute to the phosphate site. Residues Glu180 to Glu182 and Ser204 to Asp205 contribute to the a purine D-ribonucleoside site. The active-site Proton donor is the Asp205.

The protein belongs to the PNP/UDP phosphorylase family. Homohexamer; trimer of homodimers.

The enzyme catalyses a purine D-ribonucleoside + phosphate = a purine nucleobase + alpha-D-ribose 1-phosphate. It carries out the reaction a purine 2'-deoxy-D-ribonucleoside + phosphate = a purine nucleobase + 2-deoxy-alpha-D-ribose 1-phosphate. Its function is as follows. Catalyzes the reversible phosphorolytic breakdown of the N-glycosidic bond in the beta-(deoxy)ribonucleoside molecules, with the formation of the corresponding free purine bases and pentose-1-phosphate. This is Purine nucleoside phosphorylase DeoD-type from Pectobacterium atrosepticum (strain SCRI 1043 / ATCC BAA-672) (Erwinia carotovora subsp. atroseptica).